A 188-amino-acid chain; its full sequence is Hypoxanthine/guanine phosphoribosyltransferase (188 aa).

Belongs to the purine/pyrimidine phosphoribosyltransferase family. Archaeal HPRT subfamily. In terms of assembly, homodimer.

The protein localises to the cytoplasm. The catalysed reaction is IMP + diphosphate = hypoxanthine + 5-phospho-alpha-D-ribose 1-diphosphate. The enzyme catalyses GMP + diphosphate = guanine + 5-phospho-alpha-D-ribose 1-diphosphate. The protein operates within purine metabolism; IMP biosynthesis via salvage pathway; IMP from hypoxanthine: step 1/1. Its function is as follows. Catalyzes a salvage reaction resulting in the formation of IMP that is energically less costly than de novo synthesis. The protein is Hypoxanthine/guanine phosphoribosyltransferase of Methanobrevibacter ruminantium (strain ATCC 35063 / DSM 1093 / JCM 13430 / OCM 146 / M1) (Methanobacterium ruminantium).